The chain runs to 94 residues: Small ribosomal subunit protein bS20 (94 aa).

This sequence belongs to the bacterial ribosomal protein bS20 family.

In terms of biological role, binds directly to 16S ribosomal RNA. The chain is Small ribosomal subunit protein bS20 from Symbiobacterium thermophilum (strain DSM 24528 / JCM 14929 / IAM 14863 / T).